The following is a 251-amino-acid chain: Probable transcriptional regulatory protein MMAR_2098 (251 aa).

The protein belongs to the TACO1 family.

It localises to the cytoplasm. The protein is Probable transcriptional regulatory protein MMAR_2098 of Mycobacterium marinum (strain ATCC BAA-535 / M).